We begin with the raw amino-acid sequence, 642 residues long: MVGRIPDRDIAAIRERVCIEEVVGDYVQLRRAGADSLKGLCPFHNEKSPSFHVRPNHGHFHCFGCSEGGDVYAFIQKIEHVSFVEAVEMLADRIGHTINYFGTATSVQRDRGSRSRLIAANAAAAAFYAAALESDEAAPARQYLMERNFDANAARHFGCGFAPSGWDSLTKYLISKGFEFTELEAAGLSRQGRRGPMDRFHRRLLWPILTLAGEVIGFGARRLFDDDPMEAKYVNTPETLLYKKSSVMFGIDLAKRDIVKGHQAVVVEGYTDVMAMHLAGVTTAVASCGTAFGDEHLAMLRRLIMDDNWYRGELIFVFDGDAAGQAAALKAFDGDQQVAGKSFVAVAADGMDPCDLRLSSGDQALRDLVACRKPMFEFAIRSLIPDGMVLDDDPQAKVDALRRSVPLVARIRDYALRDEYARRLAGWTGWSDEGQVLARVREEANRRSVPERTRRRSVSVEQSPFMQPPGAPADQLAARPDPRDPTLWPQREALKSVLQYPVLAGPVFDTLTVESFTHPGYGAVRAAIDAAGGASAGITGAQWIDVVRQQTTSALIAGLINELGVESIQVDDEKLPRYIDGVLARLQEVWMGRQIAEVKSKLQRMSPIDQGDEYHELFGDLVAMEAYRRSLLEQASGDDMTA.

The CHC2-type zinc-finger motif lies at 41 to 65 (CPFHNEKSPSFHVRPNHGHFHCFGC). The Toprim domain maps to 262–348 (HQAVVVEGYT…AGKSFVAVAA (87 aa)). Residues glutamate 268, aspartate 319, and aspartate 321 each coordinate Mg(2+). Residues 445–480 (NRRSVPERTRRRSVSVEQSPFMQPPGAPADQLAARP) are disordered.

Belongs to the DnaG primase family. Monomer. Interacts with DnaB. Zn(2+) serves as cofactor. It depends on Mg(2+) as a cofactor.

It carries out the reaction ssDNA + n NTP = ssDNA/pppN(pN)n-1 hybrid + (n-1) diphosphate.. RNA polymerase that catalyzes the synthesis of short RNA molecules used as primers for DNA polymerase during DNA replication. The chain is DNA primase from Mycobacterium leprae (strain TN).